We begin with the raw amino-acid sequence, 266 residues long: Enoyl-CoA hydratase EchA19 (266 aa).

Glutamate 120 is a catalytic residue. Lysine 135 bears the N6-succinyllysine mark. Glutamate 140 is an active-site residue. Lysine 142 bears the N6-succinyllysine mark.

It belongs to the enoyl-CoA hydratase/isomerase family. As to quaternary structure, homotrimer; substrate probably binds in elongated tunnels between the subunits. Succinylated in vitro at pH 8.1, succinylation reduces specific activity of the enzyme 5.5-fold; succinyl-CoA is a downstream by-product of cholesterol degradation. Can be de-succinylated in vitro by NAD-dependent protein deacylase (AC P9WGG3). Succinylation may be a negative feedback regulator of cholesterol metabolism.

The catalysed reaction is (22E)-3-oxochola-4,22-dien-24-oyl-CoA + H2O = (22R)-hydroxy-3-oxo-chol-4-ene-24-oyl-CoA. It participates in steroid metabolism; cholesterol degradation. In terms of biological role, degradation of the cholesterol side chain involves 3 multistep beta-oxidation cycles, this may be involved in the second cycle. Hydrates 3-OCDO-CoA ((22E)-3-oxo-chol-4,22-dien-24-oyl-CoA) to make (22R)-HOCO-CoA (3-oxo-chol-4-ene-(22R)-hydroxy-24-oyl-CoA). Also acts on octenoyl-CoA. Not active on (E)-3-OCDS-CoA ((E)-3-oxocholest-4,24-dien-26-oyl-CoA) or 3-OPDC-CoA (3-oxo-4,17-pregnadiene-20-carboxyl-CoA). Hydrates the same substrate as ChsH3, but the 2 enzymes make different stereoisomers of the product. The protein is Enoyl-CoA hydratase EchA19 of Mycobacterium tuberculosis (strain ATCC 25618 / H37Rv).